We begin with the raw amino-acid sequence, 338 residues long: Glycerol-3-phosphate dehydrogenase [NAD(P)+] (338 aa).

Ser-13, Trp-14, and Lys-108 together coordinate NADPH. Residues Lys-108, Gly-139, and Ser-141 each coordinate sn-glycerol 3-phosphate. Position 143 (Ala-143) interacts with NADPH. Sn-glycerol 3-phosphate-binding residues include Lys-194, Asp-247, Ser-257, Arg-258, and Asn-259. The active-site Proton acceptor is the Lys-194. Position 258 (Arg-258) interacts with NADPH. Val-282 and Glu-284 together coordinate NADPH.

Belongs to the NAD-dependent glycerol-3-phosphate dehydrogenase family.

It localises to the cytoplasm. It catalyses the reaction sn-glycerol 3-phosphate + NAD(+) = dihydroxyacetone phosphate + NADH + H(+). It carries out the reaction sn-glycerol 3-phosphate + NADP(+) = dihydroxyacetone phosphate + NADPH + H(+). It participates in membrane lipid metabolism; glycerophospholipid metabolism. Its function is as follows. Catalyzes the reduction of the glycolytic intermediate dihydroxyacetone phosphate (DHAP) to sn-glycerol 3-phosphate (G3P), the key precursor for phospholipid synthesis. The chain is Glycerol-3-phosphate dehydrogenase [NAD(P)+] from Streptococcus pneumoniae (strain Taiwan19F-14).